The primary structure comprises 1861 residues: MPKLSQQAPLVSSGSGVIASQTFADLIRAALRDILLHRLDLPALVGHLTGIFGLSSNESFVITPVSTNVATGLVAATAKAVGKTGSVDNEIMEAVALAGSRGTSARTHDSKIAIIGMSGRFPEAADLDSFWSLLVQGVDAYRPVAPDRFDAHAHYDETGRRKNTSKVLGGCWINQPGLFDPKFFSISPKEAEQSDPAQRLALQTAYEALEMAGMVPDRTQSTQRERVGVFYGMFTQGGIRAFTPGRINYHFKFSGPSITVDTACSSSLAAIHVACNSLWRGDCDTAVAGGVNVLTNPDIFAGLDRGHFLSTTGNCKTFDDDADGYCRADGVGTVILKRLEDAIMDKDPILAVLNSAYTNHSAEAVSITRPHAGAQELIFSKLLRETGIHPHDVSYIEMHGTGTQAGDATEMSSVLRTFAPDTGRLSNQTLHLGSAKSNVGHGESASGVTSLIKVLLMMKHNTIPPHCGIKGRINHRFPTDLRERNVFIASQPVAWDKPHSGSGKRRVFINNFSAAGGNSALLLEDAPTRQHPETKDPRSTHIVAVSAKSSTALVNNLKRLKVFVQDNIHNLDLLAKLSYTTTARRIHYPFRAAITASSSDQLLQGIESILLRDESTKPATSQKNIGFVFSGQGAQYAGMGRHLFQNNETFRTQVLACNQICLSQGFPSILDIFNQGVEMNNLEPLVVQLGTTCLQMSLVSFWKSLGVTPDFCIGHSLGEYAALQAAGVLSVSDTIYLTGIRARLLQKKCSAGSHAMLAVRAPLAQVHGFFNPSIHEVTCLNSPHDVAIGGLVADIEDLERELAENNIEAVKVSVPFAFHSTQVEPILDEFCAAAESVQFQTQRIPVISTLLGEVVLPEAKAVFGPEYLKRHCREPVNFTAAAQAGKDANIINSASVFIEIGPHTVCSALLKSNIGPNAVTLPSLHRKDDGWKVLADTLAGLYHSGLRINWDEFHRDFESCQEVLQLPSYCWDNKNYWIQYVHNWTLTKGDPPATTAQTPALELPENSTSSVQKVIQQTDGPGPFVTIVVQSDFGSPRLAEVAEGHKVNGEMLCTSSLYAEIGMTLGRQLLEKYRPDLQGYSTEIEDMSVDKPLILKEKNKETLFRAEVVHDKSTLTAAMSIYSVDSAGKKTVDHAHCILRFADPKSWLDEWERTYYSIERSVRWLEARVEQGTDSLLSKGIVYKLFSSLVDYSPSFKGLQEVILNSSDREATAKVRLQAEKEDFDYNPMWIDSFGQLTGFLMNGHDFTEKDQVFINHGWRSMRCAKQFRKDAVYRTYICMQNVDKTKYCGDLYIIEDGVIIAVFGGMTVLPPRRGADAIHTPNPVAAAPAGLVASTKAHVRRPLDIPTRAQRQASSPQSGAIHRILVILAEEVGLSLETLTDDLVFADYGVDSLLSLTITGRIREELDLDVDSSTFTNCSTLGELRLFLAADQKLDDAVACESSNGQHTPQTSDKGSGTLTAQKPDHDTDSEMTLNRVCAIIAEEVGISVEELSSSQDFQELGIDSLSALTILSRVREELQLDLESDFFDTHPSFYSLQKTLRGTEGASNRTLEPNGAIPSRHDLKSDLGNIEWQSGQNIVASAPHATSILVSGSPSTARMILVLFPDGSGSAASYGALAPKIRKDIAVYALNCPWRTNGEEILRLGVSLDQMVAKHLIEVRRILDNHQQSRLNGSIDLALGGWSAGGILAIEGVRQLRQTGIVVQKLVLLDAPNPIGLQNPPPRMFHFLDELGILGAGTGKAPTWVLQHFDAMVNLLKSYRPRPLSAESAPKSLIVYAKDGVCKDPKGPQMDTKPDDAREMLWLLYDRVDFSAEGWKSLVGQQNLVVGVVEDVNHFSMMNPGPKIIEMSNLIGDFLLGLN.

One can recognise a Ketosynthase family 3 (KS3) domain in the interval 109–525; it reads DSKIAIIGMS…GGNSALLLED (417 aa). Active-site for beta-ketoacyl synthase activity residues include Cys-264, His-399, and His-441. The malonyl-CoA:ACP transacylase (MAT) domain stretch occupies residues 626–931; it reads GFVFSGQGAQ…PSLHRKDDGW (306 aa). Ser-716 serves as the catalytic For acyl/malonyl transferase activity. The tract at residues 1008-1312 is product template (PT) domain; it reads TSSVQKVIQQ…VFGGMTVLPP (305 aa). An N-terminal hotdog fold region spans residues 1012–1146; that stretch reads QKVIQQTDGP…CILRFADPKS (135 aa). Residues 1012-1318 form the PKS/mFAS DH domain; it reads QKVIQQTDGP…VLPPRRGADA (307 aa). Residue His-1045 is the Proton acceptor; for dehydratase activity of the active site. Residues 1174–1318 are C-terminal hotdog fold; sequence DSLLSKGIVY…VLPPRRGADA (145 aa). Catalysis depends on Asp-1232, which acts as the Proton donor; for dehydratase activity. The Carrier 1 domain maps to 1356 to 1433; it reads SPQSGAIHRI…ELRLFLAADQ (78 aa). Ser-1393 bears the O-(pantetheine 4'-phosphoryl)serine mark. Positions 1441-1470 are disordered; it reads CESSNGQHTPQTSDKGSGTLTAQKPDHDTD. Residues 1442 to 1462 show a composition bias toward polar residues; sequence ESSNGQHTPQTSDKGSGTLTA. The region spanning 1472–1546 is the Carrier 2 domain; that stretch reads EMTLNRVCAI…SLQKTLRGTE (75 aa). Ser-1506 is subject to O-(pantetheine 4'-phosphoryl)serine. The interval 1582–1855 is thioesterase (TE) domain; sequence ASAPHATSIL…IIEMSNLIGD (274 aa). Residue Ser-1685 is the For thioesterase activity of the active site.

In terms of biological role, polyketide synthase; part of the Pks2 gene cluster that mediates the formation of infectious structures (appressoria), enabling these fungi to kill insects faster. The product of the Pks2 gene cluster is different from the one of Pks1 and has still not been identified. This chain is Polyketide synthase 2, found in Metarhizium acridum (strain CQMa 102).